Consider the following 311-residue polypeptide: Oxidoreductase NAD-binding domain-containing protein 1 (311 aa).

Positions 1–17 (MACAAVMIPGLLRCSVG) are cleaved as a signal peptide. An FAD-binding FR-type domain is found at 50–186 (HMERTASVLR…GGVGINPLLS (137 aa)). An NAD(+)-binding site is contributed by 178–183 (GVGINP).

The protein is Oxidoreductase NAD-binding domain-containing protein 1 (OXNAD1) of Pongo abelii (Sumatran orangutan).